We begin with the raw amino-acid sequence, 371 residues long: Terpene cyclase 6 (371 aa).

Residues Asp-144, Asn-266, Ser-270, and Glu-274 each contribute to the Mg(2+) site. A D(D/E)XX(D/E) motif motif is present at residues 144–148 (DDVME). The short motif at 266 to 274 (NDLYSYDKE) is the NSE motif element. The short motif at 352–359 (HHATLGRY) is the WxxxxxRY motif element. Residues Arg-358 and Tyr-359 each contribute to the (2E,6E)-farnesyl diphosphate site.

Belongs to the terpene synthase family. As to quaternary structure, homodimer. Mg(2+) serves as cofactor.

It catalyses the reaction (2E,6E)-farnesyl diphosphate + H2O = (-)-alpha-acorenol + diphosphate. It participates in sesquiterpene biosynthesis. Its function is as follows. Terpene cyclase that catalyzes the cyclization of farnesyl diphosphate (FPP) to the spirocyclic sesquiterpene alpha-acorenol. This is Terpene cyclase 6 from Gibberella fujikuroi (strain CBS 195.34 / IMI 58289 / NRRL A-6831) (Bakanae and foot rot disease fungus).